The following is a 72-amino-acid chain: Nod factor export ATP-binding protein I (72 aa).

The protein belongs to the ABC transporter superfamily. Lipooligosaccharide exporter (TC 3.A.1.102) family. The complex is composed of two ATP-binding proteins (NodI) and two transmembrane proteins (NodJ).

The protein resides in the cell inner membrane. Functionally, part of the ABC transporter complex NodIJ involved in the export of the nodulation factors (Nod factors), the bacterial signal molecules that induce symbiosis and subsequent nodulation induction. Nod factors are LCO (lipo-chitin oligosaccharide), a modified beta-1,4-linked N-acetylglucosamine oligosaccharide. This subunit is responsible for energy coupling to the transport system. This Rhizobium leguminosarum bv. trifolii protein is Nod factor export ATP-binding protein I.